The primary structure comprises 73 residues: Stigmurin (73 aa).

An N-terminal signal peptide occupies residues 1-22 (MQIKHLITLFFLVLIVADQCSA). K39 bears the Lysine amide mark. Positions 45–73 (EISAQIEQYKDLQKREAELEKLLDRLPMY) are excised as a propeptide.

It belongs to the non-disulfide-bridged peptide (NDBP) superfamily. Short antimicrobial peptide (group 4) family. As to expression, expressed by the venom gland.

It is found in the secreted. Functionally, antimicrobial peptide with activity against Gram-positive bacterial strains (S.aureus (MIC=2-140 uM), methicillin-resistant S.aureus (MRSA) (MIC=8-17 uM), S.epidermidis (MIC=1.17 uM), and the yeasts C.albicans, C.krusei, and C.glabrata (MIC=34-69 uM)). Acts by disrupting the cell membrane (observed on outer layer of the S.aureus). Is not active against Gram-negative bacteria (E.coli, E.Cloacae, P.aeruginosa), and the Gram-positive bacterium E.faecalis. Also shows toxicity against several cell lines, but possess low hemolytic activity at the highest concentration tested. Also shows antiparasitic activity against Trypanosoma cruzi by decreasing the viability of the epimastigote and trypomastigote forms of the parasite. Displays high hydroxyl radical scavenging activity (antioxidant action). In a wound infection model, the topical application of this peptide demonstrates antibacterial effects, as well as an ability to accelerate wound closure speed, which suggests the induction of tissue repair. In the model of polymicrobial sepsis, it exhibits an antibiotic effect, reducing the levels of microorganisms in the infectious focus and the inflammatory responses in the lung and cecum of septic animals. This is Stigmurin from Tityus stigmurus (Brazilian scorpion).